The primary structure comprises 116 residues: Protein Rev (116 aa).

Phosphoserine; by host CK2 is present on residues Ser5 and Ser8. A homomultimerization region spans residues 18 to 26 (CIKILYQSN). Residues 27 to 47 (PYPKPEGTRQARRNRRRRWRA) form a disordered region. The short motif at 34 to 50 (TRQARRNRRRRWRARQR) is the Nuclear localization signal and RNA-binding (RRE) element. Over residues 36–47 (QARRNRRRRWRA) the composition is skewed to basic residues. Positions 73-84 (LQLPPLERLHIN) match the Nuclear export signal and binding to XPO1 motif. Positions 87–116 (EDCGQGPEEGVGSSQISGESHAVLESGTKE) are disordered. The residue at position 99 (Ser99) is a Phosphoserine; by host.

This sequence belongs to the HIV-1 REV protein family. As to quaternary structure, homomultimer; when bound to the RRE. Multimeric assembly is essential for activity and may involve XPO1. Binds to human KPNB1, XPO1, TNPO1, RANBP5 and IPO7. Interacts with the viral Integrase. Interacts with human KHDRBS1. Interacts with human NAP1; this interaction decreases Rev multimerization and stimulates its activity. Interacts with human DEAD-box helicases DDX3 and DDX24; these interactions may serve for viral RNA export to the cytoplasm and packaging, respectively. Interacts with human PSIP1; this interaction may inhibit HIV-1 DNA integration by promoting dissociation of the Integrase-LEDGF/p75 complex. In terms of processing, asymmetrically arginine dimethylated at one site by host PRMT6. Methylation impairs the RNA-binding activity and export of viral RNA from the nucleus to the cytoplasm. Post-translationally, phosphorylated by protein kinase CK2. Presence of, and maybe binding to the N-terminus of the regulatory beta subunit of CK2 is necessary for CK2-mediated Rev's phosphorylation.

It is found in the host nucleus. The protein localises to the host nucleolus. The protein resides in the host cytoplasm. Its function is as follows. Escorts unspliced or incompletely spliced viral pre-mRNAs (late transcripts) out of the nucleus of infected cells. These pre-mRNAs carry a recognition sequence called Rev responsive element (RRE) located in the env gene, that is not present in fully spliced viral mRNAs (early transcripts). This function is essential since most viral proteins are translated from unspliced or partially spliced pre-mRNAs which cannot exit the nucleus by the pathway used by fully processed cellular mRNAs. Rev itself is translated from a fully spliced mRNA that readily exits the nucleus. Rev's nuclear localization signal (NLS) binds directly to KPNB1/Importin beta-1 without previous binding to KPNA1/Importin alpha-1. KPNB1 binds to the GDP bound form of RAN (Ran-GDP) and targets Rev to the nucleus. In the nucleus, the conversion from Ran-GDP to Ran-GTP dissociates Rev from KPNB1 and allows Rev's binding to the RRE in viral pre-mRNAs. Rev multimerization on the RRE via cooperative assembly exposes its nuclear export signal (NES) to the surface. Rev can then form a complex with XPO1/CRM1 and Ran-GTP, leading to nuclear export of the complex. Conversion from Ran-GTP to Ran-GDP mediates dissociation of the Rev/RRE/XPO1/RAN complex, so that Rev can return to the nucleus for a subsequent round of export. Beside KPNB1, also seems to interact with TNPO1/Transportin-1, RANBP5/IPO5 and IPO7/RANBP7 for nuclear import. The nucleoporin-like HRB/RIP is an essential cofactor that probably indirectly interacts with Rev to release HIV RNAs from the perinuclear region to the cytoplasm. In Human immunodeficiency virus type 1 group M subtype F1 (isolate VI850) (HIV-1), this protein is Protein Rev.